Here is a 282-residue protein sequence, read N- to C-terminus: MENGFLLINKEQGKTSFETLFPIKKYFNTNHVGHAGTLDKFASGILIALVGKYTKLAGYFISLDKEYVAEFRFGLETDTLDSNGRIVNKADYIPSVEDIDLKLKDFVGEIYQSPPRFSSIHIDGIRAYKLALNGKFFEIKKRRVNVYDIQRLSYDFSSSSLSLKITCSKGTYIRSIARDLAYSLNSCAYVSNLKRTKIGMFRLKDSTLCKNLSKSSLISLESLSSFKKVYIDSSKVNLVKNGAYVEVQININEFKILKSREGEILAVIEGIGFNKYKYVIIF.

Asp39 acts as the Nucleophile in catalysis.

The protein belongs to the pseudouridine synthase TruB family. Type 1 subfamily.

It catalyses the reaction uridine(55) in tRNA = pseudouridine(55) in tRNA. Responsible for synthesis of pseudouridine from uracil-55 in the psi GC loop of transfer RNAs. The protein is tRNA pseudouridine synthase B of Borrelia garinii subsp. bavariensis (strain ATCC BAA-2496 / DSM 23469 / PBi) (Borreliella bavariensis).